The following is a 509-amino-acid chain: Photosystem II CP47 reaction center protein (509 aa).

6 consecutive transmembrane segments (helical) span residues 21–36 (AVHM…WAGS), 101–115 (IVFS…IWHW), 140–156 (GIHL…FGAF), 203–218 (IAAG…FHLS), 237–253 (VLSS…AFVV), and 458–473 (SFAL…HGSR).

Belongs to the PsbB/PsbC family. PsbB subfamily. In terms of assembly, PSII is composed of 1 copy each of membrane proteins PsbA, PsbB, PsbC, PsbD, PsbE, PsbF, PsbH, PsbI, PsbJ, PsbK, PsbL, PsbM, PsbT, PsbX, PsbY, PsbZ, Psb30/Ycf12, at least 3 peripheral proteins of the oxygen-evolving complex and a large number of cofactors. It forms dimeric complexes. Binds multiple chlorophylls. PSII binds additional chlorophylls, carotenoids and specific lipids. serves as cofactor.

It is found in the plastid. Its subcellular location is the chloroplast thylakoid membrane. In terms of biological role, one of the components of the core complex of photosystem II (PSII). It binds chlorophyll and helps catalyze the primary light-induced photochemical processes of PSII. PSII is a light-driven water:plastoquinone oxidoreductase, using light energy to abstract electrons from H(2)O, generating O(2) and a proton gradient subsequently used for ATP formation. The protein is Photosystem II CP47 reaction center protein of Populus deltoides (Eastern poplar).